A 207-amino-acid chain; its full sequence is uncharacterized protein (207 aa).

This sequence belongs to the IIV-6 350L family.

This is an uncharacterized protein from Invertebrate iridescent virus 6 (IIV-6).